Reading from the N-terminus, the 673-residue chain is Poly(glycerol-phosphate) alpha-glucosyltransferase (673 aa).

S2 carries the phosphoserine modification.

Belongs to the glycosyltransferase group 1 family. Glycosyltransferase 4 subfamily.

It localises to the cytoplasm. It carries out the reaction 4-O-{[(2R)-1-glycerylphospho](n)-(2R)-1-glycerylphospho}-N-acetyl-beta-D-mannosaminyl-(1-&gt;4)-N-acetyl-alpha-D-glucosaminyl undecaprenyl diphosphate + n UDP-alpha-D-glucose = 4-O-{[(2R)-2-alpha-D-glucosyl-1-glycerylphospho](n)-(2R)-1-glycerylphospho}-N-acetyl-beta-D-mannosaminyl-(1-&gt;4)-N-acetyl-alpha-D-glucosaminyl undecaprenyl diphosphate + n UDP + n H(+). Its pathway is cell wall biogenesis; poly(glycerol phosphate) teichoic acid biosynthesis. Functionally, catalyzes the addition of glucose to the C-2 hydroxy group of the glycerol units in teichoic acid. This is Poly(glycerol-phosphate) alpha-glucosyltransferase (tagE) from Bacillus subtilis (strain 168).